The sequence spans 85 residues: Sodium channel neurotoxin MeuNaTxalpha-2 (85 aa).

Positions 1–19 (MNYLVMISLALLLMTGVES) are cleaved as a signal peptide. One can recognise an LCN-type CS-alpha/beta domain in the interval 21–83 (RDAYIANDRN…VPIRIPGECR (63 aa)). Intrachain disulfides connect C31-C82, C35-C55, C41-C65, and C45-C67. R83 carries the arginine amide modification.

Belongs to the long (4 C-C) scorpion toxin superfamily. Sodium channel inhibitor family. Alpha subfamily. As to expression, expressed by the venom gland.

Its subcellular location is the secreted. Functionally, alpha toxins bind voltage-independently at site-3 of sodium channels (Nav) and inhibit the inactivation of the activated channels, thereby blocking neuronal transmission. This toxin inhibits inactivation of Nav1.4/SCN4A (EC(50)=2.23 uM) and drosophila DmNav1 (EC(50)=220 nM). The toxin (1 uM) does not significantly shift the midpoint of activation at the two channels, but induces a significant depolarizing shift in the V(1/2) of inactivation of the channels. In addition, the toxin accelerates the recovery from fast inactivation in Nav1.4/SCN4A and DmNav1. It also shows antimicrobial activity. In Mesobuthus eupeus (Lesser Asian scorpion), this protein is Sodium channel neurotoxin MeuNaTxalpha-2.